Reading from the N-terminus, the 64-residue chain is Small ribosomal subunit protein bS21 (64 aa).

The disordered stretch occupies residues 37–64 (EKPSVKRKRKEKEAQRRLRKKMRMMKKA). Residues 53-64 (RLRKKMRMMKKA) are compositionally biased toward basic residues.

This sequence belongs to the bacterial ribosomal protein bS21 family.

The protein is Small ribosomal subunit protein bS21 of Syntrophotalea carbinolica (strain DSM 2380 / NBRC 103641 / GraBd1) (Pelobacter carbinolicus).